The primary structure comprises 400 residues: Nicotinate phosphoribosyltransferase (400 aa).

His-220 is subject to Phosphohistidine; by autocatalysis.

It belongs to the NAPRTase family. In terms of processing, transiently phosphorylated on a His residue during the reaction cycle. Phosphorylation strongly increases the affinity for substrates and increases the rate of nicotinate D-ribonucleotide production. Dephosphorylation regenerates the low-affinity form of the enzyme, leading to product release.

It catalyses the reaction nicotinate + 5-phospho-alpha-D-ribose 1-diphosphate + ATP + H2O = nicotinate beta-D-ribonucleotide + ADP + phosphate + diphosphate. The protein operates within cofactor biosynthesis; NAD(+) biosynthesis; nicotinate D-ribonucleotide from nicotinate: step 1/1. Its function is as follows. Catalyzes the synthesis of beta-nicotinate D-ribonucleotide from nicotinate and 5-phospho-D-ribose 1-phosphate at the expense of ATP. The polypeptide is Nicotinate phosphoribosyltransferase (Salmonella heidelberg (strain SL476)).